The following is a 66-amino-acid chain: Large ribosomal subunit protein uL29 (66 aa).

This sequence belongs to the universal ribosomal protein uL29 family.

This is Large ribosomal subunit protein uL29 from Deinococcus deserti (strain DSM 17065 / CIP 109153 / LMG 22923 / VCD115).